The primary structure comprises 610 residues: Dapper homolog 3 (610 aa).

At Ser6 the chain carries Phosphoserine. Disordered stretches follow at residues 50–76 (PGMG…RRAA), 102–179 (LESG…SVGA), and 200–579 (TCSS…PAGP). A compositionally biased stretch (acidic residues) spans 56-69 (EAEDEEDAEEDEDA). Positions 63–87 (AEEDEDAAAARRAAAALEEQLEALP) form a coiled coil. The segment covering 120–138 (DPSSTGGPDSPPSTFCGDS) has biased composition (low complexity). Residues Ser165 and Ser237 each carry the phosphoserine modification. An Omega-N-methylarginine modification is found at Arg255. A compositionally biased stretch (pro residues) spans 317–331 (PPEPAPPAAASPPSS). A compositionally biased stretch (low complexity) spans 344 to 356 (PGAPAASRGLPGR). Phosphoserine occurs at positions 409 and 456. A compositionally biased stretch (pro residues) spans 475–485 (PRGPAPSPSAP). Positions 524 to 545 (ESESSASEGESPAFSSASSDSD) are enriched in low complexity. Gly residues predominate over residues 566–576 (GPGGAAGGGTP). The short motif at 607 to 610 (MTTV) is the PDZ-binding element.

Belongs to the dapper family. As to quaternary structure, can form homodimers and heterodimers with DACT1 or DACT3. Interacts with CSNK1D, PKA catalytic subunit, PKC-type kinase, DVL1, DVL2, DVL3, VANGL1, VANGL2 and CTNND1. In terms of tissue distribution, expressed in brain and uterus.

May be involved in regulation of intracellular signaling pathways during development. Specifically thought to play a role in canonical and/or non-canonical Wnt signaling pathways through interaction with DSH (Dishevelled) family proteins. The chain is Dapper homolog 3 (Dact3) from Mus musculus (Mouse).